The primary structure comprises 364 residues: Long-wave-sensitive opsin 1 (364 aa).

The Extracellular segment spans residues 1–52 (MAQRWGPQKLAGGQPQAGFEDSTQASIFTYTNNNATRDPFEGPNYHIAPRWV). Ser22 carries O-linked (GlcNAc) serine glycosylation. N-linked (GlcNAc...) asparagine glycosylation occurs at Asn34. A helical membrane pass occupies residues 53 to 77 (YHVTSAWMIFVVIASVFTNGLVLAA). Over 78–89 (TMRFKKLRHPLN) the chain is Cytoplasmic. A helical membrane pass occupies residues 90–115 (WILVNLAVADLAETIIASTISVVNQI). Over 116–129 (YGYFVLGHPMCVVE) the chain is Extracellular. An intrachain disulfide couples Cys126 to Cys203. Residues 130–149 (GYTVSLCGITGLWSLAIISW) traverse the membrane as a helical segment. At 150 to 168 (ERWMVVCKPFGNVRFDAKL) the chain is on the cytoplasmic side. The chain crosses the membrane as a helical span at residues 169–192 (AVAGIAFSWIWAAVWTAPPIFGWS). Residues 193-218 (RYWPHGLKTSCGPDVFSGSSYPGVQS) lie on the Extracellular side of the membrane. Residues 219 to 246 (YMIVLMITCCIIPLSVIVLCYLQVWLAI) traverse the membrane as a helical segment. The Cytoplasmic portion of the chain corresponds to 247 to 268 (RAVAKQQKESESTQKAEKEVTR). Residues 269-292 (MVMVMVFAFCLCWGPYTFFACFAA) traverse the membrane as a helical segment. The Extracellular portion of the chain corresponds to 293–300 (AHPGYAFH). A helical transmembrane segment spans residues 301–325 (PLVAALPAYFAKSATIYNPIIYVFM). Lys312 is modified (N6-(retinylidene)lysine). Over 326 to 364 (NRQFRNCILQLFGKKVDDSSELSSVSKTEASSVSSVSPA) the chain is Cytoplasmic.

It belongs to the G-protein coupled receptor 1 family. Opsin subfamily. Post-translationally, phosphorylated on some or all of the serine and threonine residues present in the C-terminal region. In terms of tissue distribution, the three color pigments are found in the cone photoreceptor cells. Expressed in retina.

It localises to the membrane. Functionally, visual pigments are the light-absorbing molecules that mediate vision. They consist of an apoprotein, opsin, covalently linked to cis-retinal. The polypeptide is Long-wave-sensitive opsin 1 (OPN1LW) (Equus caballus (Horse)).